Here is a 1072-residue protein sequence, read N- to C-terminus: DNA-directed RNA polymerase subunit beta (1072 aa).

The protein belongs to the RNA polymerase beta chain family. As to quaternary structure, in plastids the minimal PEP RNA polymerase catalytic core is composed of four subunits: alpha, beta, beta', and beta''. When a (nuclear-encoded) sigma factor is associated with the core the holoenzyme is formed, which can initiate transcription.

The protein localises to the plastid. It is found in the chloroplast. It catalyses the reaction RNA(n) + a ribonucleoside 5'-triphosphate = RNA(n+1) + diphosphate. In terms of biological role, DNA-dependent RNA polymerase catalyzes the transcription of DNA into RNA using the four ribonucleoside triphosphates as substrates. In Lepidium virginicum (Virginia pepperweed), this protein is DNA-directed RNA polymerase subunit beta.